The chain runs to 191 residues: Programmed cell death protein 6 (191 aa).

Ala-2 carries the N-acetylalanine modification. 5 consecutive EF-hand domains span residues 23 to 58 (PDQSFLWNVFQRVDKDRSGVISDNELQQALSNGTWT), 59 to 89 (PFNPVTVRSIISMFDRENKAGVNFSEFTGVW), 90 to 125 (KYITDWQNVFRTYDRDNSGMIDKNELKQALSGFGYR), 126 to 161 (LSDQFHDILIRKFDRQGRGQIAFDDFIQGCIVLQRL), and 162 to 191 (TDIFRRYDTDQDGWIQVSYEQYLSMVFSIV). The Ca(2+) site is built by Asp-36, Asp-38, Ser-40, Val-42, and Glu-47. Positions 103, 105, 107, 109, and 114 each coordinate Ca(2+). Residues Asp-169, Asp-171, Asp-173, and Trp-175 each coordinate Mg(2+).

Homodimer and heterodimer; heterodimerizes (via the EF-hand 5) with PEF1. Isoform 1 and isoform 2 self-associate; probably forming homodimers. Interacts with CPNE4 (via VWFA domain). Interacts with PDCD6IP; the interaction is calcium-dependent. Interacts with RBM22. Interacts with PLSCR4. Interacts with ANXA7 and TSG101. Interacts with DAPK1. Interacts with SEC31A; the interaction is calcium-dependent and promotes monoubiquitination of SEC31A. Interacts with ANXA11 (via N-terminus); the interaction is calcium-dependent. Interacts with PLSCR3 (via N-terminus); the interaction is calcium-dependent. Interacts with MCOLN1; the interaction is calcium-dependent. Interacts with KDR; the interaction is calcium-dependent. Interacts with HEBP2; the interaction is calcium-dependent. Interacts with TFG. Isoform 1: Interacts with SHISA5, leading to stabilize it. Isoform 2: Does not interact with SHISA5. Isoform 2: Does not interact with PDCD6IP, TSG101, ANXA7 and ANXA11.

The protein resides in the endoplasmic reticulum membrane. It is found in the cytoplasmic vesicle. Its subcellular location is the COPII-coated vesicle membrane. It localises to the cytoplasm. The protein localises to the nucleus. The protein resides in the endosome. Functionally, calcium sensor that plays a key role in processes such as endoplasmic reticulum (ER)-Golgi vesicular transport, endosomal biogenesis or membrane repair. Acts as an adapter that bridges unrelated proteins or stabilizes weak protein-protein complexes in response to calcium: calcium-binding triggers exposure of apolar surface, promoting interaction with different sets of proteins thanks to 3 different hydrophobic pockets, leading to translocation to membranes. Involved in ER-Golgi transport by promoting the association between PDCD6IP and TSG101, thereby bridging together the ESCRT-III and ESCRT-I complexes. Together with PEF1, acts as a calcium-dependent adapter for the BCR(KLHL12) complex, a complex involved in ER-Golgi transport by regulating the size of COPII coats. In response to cytosolic calcium increase, the heterodimer formed with PEF1 interacts with, and bridges together the BCR(KLHL12) complex and SEC31 (SEC31A or SEC31B), promoting monoubiquitination of SEC31 and subsequent collagen export, which is required for neural crest specification. Involved in the regulation of the distribution and function of MCOLN1 in the endosomal pathway. Promotes localization and polymerization of TFG at endoplasmic reticulum exit site. Required for T-cell receptor-, Fas-, and glucocorticoid-induced apoptosis. May mediate Ca(2+)-regulated signals along the death pathway: interaction with DAPK1 can accelerate apoptotic cell death by increasing caspase-3 activity. Its role in apoptosis may however be indirect, as suggested by knockout experiments. May inhibit KDR/VEGFR2-dependent angiogenesis; the function involves inhibition of VEGF-induced phosphorylation of the Akt signaling pathway. Has a lower Ca(2+) affinity than isoform 1. The polypeptide is Programmed cell death protein 6 (Pdcd6) (Mus musculus (Mouse)).